Here is a 62-residue protein sequence, read N- to C-terminus: Alpha-lytic protease L1 (62 aa).

Ser48 functions as the Charge relay system in the catalytic mechanism.

This sequence belongs to the peptidase S1 family. Monomer.

It localises to the secreted. The enzyme catalyses Preferential cleavage: Ala-|-Xaa, Val-|-Xaa in bacterial cell walls, elastin and other proteins.. With respect to regulation, inhibited by phenylmethanesulfonyl fluoride (PMSF) and p-chloromercuribenzoate (PCMB). Functionally, has bacteriolytic activity. In Lysobacter sp. (strain XL1), this protein is Alpha-lytic protease L1.